Reading from the N-terminus, the 423-residue chain is GPI mannosyltransferase 2 (423 aa).

9 helical membrane-spanning segments follow: residues 7–27 (LTLI…ILSG), 102–122 (VILG…LVLY), 128–148 (IFNP…PTAT), 151–171 (APYT…LLSI), 191–211 (TGIF…AHIF), 228–248 (FLSA…TETV), 298–318 (LAMP…SHLV), 333–353 (PPPI…LLLF), and 400–420 (YWIG…AGHY).

Belongs to the PIGV family.

The protein resides in the endoplasmic reticulum membrane. It functions in the pathway glycolipid biosynthesis; glycosylphosphatidylinositol-anchor biosynthesis. In terms of biological role, mannosyltransferase involved in glycosylphosphatidylinositol-anchor biosynthesis. Transfers the second mannose to the glycosylphosphatidylinositol during GPI precursor assembly. The sequence is that of GPI mannosyltransferase 2 (GPI18) from Cryptococcus neoformans var. neoformans serotype D (strain B-3501A) (Filobasidiella neoformans).